The chain runs to 132 residues: MSMNDPLGDMLTRIRNAQMRGKSTVRTPGSKLRAWVLDVLKAEGYIRGYEEVTTEAGHKELEISLKYYEGTPVIRELARVSKPGRRVYAGAKELPQVRNGLGVSIVSTPKGVMSDAAARSANVGGEVLCTVF.

Belongs to the universal ribosomal protein uS8 family. In terms of assembly, part of the 30S ribosomal subunit. Contacts proteins S5 and S12.

One of the primary rRNA binding proteins, it binds directly to 16S rRNA central domain where it helps coordinate assembly of the platform of the 30S subunit. This chain is Small ribosomal subunit protein uS8, found in Paracoccus denitrificans (strain Pd 1222).